Reading from the N-terminus, the 368-residue chain is MQTYGKTDVTYAWYAGNSGVTNRSGRFIASHIGHTGLICFGAGANTLFELARYDSALPIGDQGFVVLPHLAGLGIGGIENGVITDSYGMLVVAVFHLIFSAVYAGGAMLHSFRYKEDLGEYPQGSRPNKFDFKWDDPDRLTFILGHHLLFLGLGCVQFVEWAKYHGIYDPAMGVVRKVEYNLDLSMVWNHQIDFLTINSLEDVMGGHAFLAFFLSAGAIWHIFSKPFGEYTEFKGKGLLSAEFVLSTSLAGAAFIAFVAAFWASMNTTIYPTDLYGGPLNIELNFAPYFSDTDPLFGGDLHSARSWLSNFHFYLGFFYLQGHFWHGLRAMGFDFKRVEKLFDQLESNEISLNPAKSTTVPSTSTDSAT.

6 consecutive transmembrane segments (helical) span residues 27–47 (FIAS…ANTL), 63–83 (GFVV…NGVI), 89–109 (MLVV…GAML), 203–223 (VMGG…WHIF), 243–263 (FVLS…AFWA), and 307–327 (LSNF…WHGL).

Belongs to the PsbB/PsbC family. IsiA/Pcb subfamily. The antenna complex consists of divinyl chlorophylls (a and b) and divinyl chlorophyll a/b binding proteins. Forms complexes with PSII, consisting of a PSII dimer and 4 or 8 PcbA subunits. These complexes are also found under conditions of iron-starvation. Divinyl chlorophyll a serves as cofactor. Requires divinyl chlorophyll b as cofactor.

The protein resides in the cellular thylakoid membrane. Functionally, the antenna complex functions as a light receptor, it captures and delivers excitation energy to photosystems II. The Prochlorales pcb genes are not related to higher plant LHCs. The chain is Divinyl chlorophyll a/b light-harvesting protein PcbA (pcbA) from Prochlorococcus marinus (strain MIT 9313).